Here is a 361-residue protein sequence, read N- to C-terminus: MSTAREQPIFSTRAHVFQIDPATKRNWIPAGKHALTVSYFYDATRNVYRIISIGGAKAIINSTVTPNMTFTKTSQKFGQWADSRANTVYGLGFASEQHLTQFAEKFQEVKEAARLAREKSQDGGELTSPALGLASHQVPPSPLVSANGPGEEKLFRSQSADAPGPTERERLKKMLSEGSVGEVQWEAEFFALQDSNNKLAGALREANAAAAQWRQQLEAQRAEAERLRQRVAELEAQAASEVTPTGEKEGLGQGQSLEQLEALVQTKDQEIQTLKSQTGGPREALEAAEREETQQKVQDLETRNAELEHQLRAMERSLEEARAERERARAEVGRAAQLLDVSLFELSELREGLARLAEAAP.

Residues 1–80 (MSTAREQPIF…TKTSQKFGQW (80 aa)) are required for interaction with NFATC2. Residues 1 to 113 (MSTAREQPIF…EKFQEVKEAA (113 aa)) enclose the WH1 domain. The disordered stretch occupies residues 114 to 169 (RLAREKSQDGGELTSPALGLASHQVPPSPLVSANGPGEEKLFRSQSADAPGPTERE). Phosphoserine is present on residues S120 and S159. 2 coiled-coil regions span residues 191–243 (ALQD…SEVT) and 254–358 (GQSL…RLAE).

Belongs to the Homer family. Tetramer. Isoform 1 and isoform 2 encode coiled-coil structures that mediate homo- and heteromultimerization. Interacts with NFATC2; interaction is calcium independent; interaction competes with PPP3CA for NFATC2 binding; interaction is reduced by AKT activation. Interacts with NFATC1 and NFATC4. Interacts with SHANK1; forms a high-order complex at least composed of SHANK1 and HOMER3; the complex formation is regulated by CAMK2A-mediated phosphorylation.

It localises to the cytoplasm. The protein localises to the postsynaptic density. It is found in the synapse. Its function is as follows. Postsynaptic density scaffolding protein. Binds and cross-links cytoplasmic regions of GRM1, GRM5, ITPR1, DNM3, RYR1, RYR2, SHANK1 and SHANK3. By physically linking GRM1 and GRM5 with ER-associated ITPR1 receptors, it aids the coupling of surface receptors to intracellular calcium release. Isoforms can be differently regulated and may play an important role in maintaining the plasticity at glutamatergic synapses. Negatively regulates T cell activation by inhibiting the calcineurin-NFAT pathway. Acts by competing with calcineurin/PPP3CA for NFAT protein binding, hence preventing NFAT activation by PPP3CA. The protein is Homer protein homolog 3 of Homo sapiens (Human).